The primary structure comprises 138 residues: Large ribosomal subunit protein uL16 (138 aa).

A compositionally biased stretch (basic residues) spans 1 to 16 (MLIPRRVKHRKQHHPG). The interval 1–25 (MLIPRRVKHRKQHHPGRSGAATGGT) is disordered.

Belongs to the universal ribosomal protein uL16 family. As to quaternary structure, part of the 50S ribosomal subunit.

Functionally, binds 23S rRNA and is also seen to make contacts with the A and possibly P site tRNAs. The polypeptide is Large ribosomal subunit protein uL16 (Pseudarthrobacter chlorophenolicus (strain ATCC 700700 / DSM 12829 / CIP 107037 / JCM 12360 / KCTC 9906 / NCIMB 13794 / A6) (Arthrobacter chlorophenolicus)).